The chain runs to 413 residues: 3-isopropylmalate dehydratase large subunit (413 aa).

Residues Cys295, Cys353, and Cys356 each coordinate [4Fe-4S] cluster.

Belongs to the aconitase/IPM isomerase family. LeuC type 2 subfamily. In terms of assembly, heterodimer of LeuC and LeuD. [4Fe-4S] cluster is required as a cofactor.

The enzyme catalyses (2R,3S)-3-isopropylmalate = (2S)-2-isopropylmalate. The protein operates within amino-acid biosynthesis; L-leucine biosynthesis; L-leucine from 3-methyl-2-oxobutanoate: step 2/4. Catalyzes the isomerization between 2-isopropylmalate and 3-isopropylmalate, via the formation of 2-isopropylmaleate. The chain is 3-isopropylmalate dehydratase large subunit from Pyrobaculum calidifontis (strain DSM 21063 / JCM 11548 / VA1).